The following is a 132-amino-acid chain: Agouti-signaling protein (132 aa).

Residues 1–22 (MDVTXLLLATLLVFLCCFAAYS) form the signal peptide. Residue N39 is glycosylated (N-linked (GlcNAc...) asparagine). Positions 62–93 (ISRKEAENKRSSKKEASKQKVARPRTPLSVPC) are disordered. Basic and acidic residues predominate over residues 64–79 (RKEAENKRSSKKEASK). 5 disulfide bridges follow: C93–C108, C100–C114, C107–C125, C111–C132, and C116–C123. Residues 93–132 (CVSTRGSCKPPAPACCHPCASCQCRFFRSACSCRVINVNC) form the Agouti domain.

It is found in the secreted. Involved in the regulation of melanogenesis. The binding of ASP to MC1R precludes alpha-MSH initiated signaling and thus blocks production of cAMP, leading to a down-regulation of eumelanogenesis (brown/black pigment) and thus increasing synthesis of pheomelanin (yellow/red pigment). This Leontopithecus chrysomelas (Golden-headed lion tamarin) protein is Agouti-signaling protein (ASIP).